A 267-amino-acid polypeptide reads, in one-letter code: Acyl-[acyl-carrier-protein]--UDP-N-acetylglucosamine O-acyltransferase (267 aa).

The protein belongs to the transferase hexapeptide repeat family. LpxA subfamily. In terms of assembly, homotrimer.

The protein localises to the cytoplasm. It carries out the reaction a (3R)-hydroxyacyl-[ACP] + UDP-N-acetyl-alpha-D-glucosamine = a UDP-3-O-[(3R)-3-hydroxyacyl]-N-acetyl-alpha-D-glucosamine + holo-[ACP]. It participates in glycolipid biosynthesis; lipid IV(A) biosynthesis; lipid IV(A) from (3R)-3-hydroxytetradecanoyl-[acyl-carrier-protein] and UDP-N-acetyl-alpha-D-glucosamine: step 1/6. In terms of biological role, involved in the biosynthesis of lipid A, a phosphorylated glycolipid that anchors the lipopolysaccharide to the outer membrane of the cell. The polypeptide is Acyl-[acyl-carrier-protein]--UDP-N-acetylglucosamine O-acyltransferase (Proteus mirabilis (strain HI4320)).